The chain runs to 3535 residues: Lysosomal-trafficking regulator (3535 aa).

Residues 412-436 are disordered; that stretch reads MESSASTAMPKQQQHPRHKRQRSSQ. A WD 1 repeat occupies 689 to 736; it reads TLSRRLIQLQLNSSDRASQLFQALLYKCSKHSRAKFWLDESSTPAKLE. Residues 1066 to 1096 show a composition bias toward polar residues; sequence STHQEPTGVVNSPSGDSQQPRPRARSFNSGS. Disordered regions lie at residues 1066–1132 and 1592–1613; these read STHQ…NAGV and GEGQ…TLDG. Residues 1596-1610 are compositionally biased toward low complexity; the sequence is PTGRSPGSSSSSRST. In terms of domain architecture, BEACH-type PH spans 2686-2784; sequence SLNSQILYNF…MREVFCDKIV (99 aa). Residues 2784–3081 enclose the BEACH domain; that stretch reads VATPDQSKVI…QLFKSPHPAS (298 aa). The tract at residues 3254–3287 is disordered; sequence GIGGGGSERVDEAGNLHPTSSASSVNSSSISSGG. Residues 3273 to 3285 show a composition bias toward low complexity; that stretch reads SSASSVNSSSISS. WD repeat units follow at residues 3307-3346, 3442-3486, and 3489-3527; these read RHTD…YVRT, VHED…FVSE, and TGTS…GNAP.

In terms of assembly, interacts with Rab5; the interaction is independent of GDP or GTP. Interacts with msps.

The protein localises to the vesicle. It is found in the cytoplasm. It localises to the cytoskeleton. The protein resides in the spindle. Its subcellular location is the spindle pole. Functionally, adapter protein that regulates intracellular membrane fusion reactions. Regulates the fusion of lysosome-related organelles. Promotes microtubules nucleation and centrosomal recruitment of microtubule nucleating proteins such as msps. In syncytial embryos, during the formation of yolk granules, suppresses vesicle fusion events with lipid droplets, possibly via interaction with Rab5. In the eye, regulates pigment granules size. In hemocytes, required for the late steps of bacteria phagocytosis. In fat body, required for autophagosome maturation. In Drosophila melanogaster (Fruit fly), this protein is Lysosomal-trafficking regulator.